We begin with the raw amino-acid sequence, 259 residues long: Imidazole glycerol phosphate synthase subunit HisF (259 aa).

Active-site residues include aspartate 11 and aspartate 130.

Belongs to the HisA/HisF family. Heterodimer of HisH and HisF.

Its subcellular location is the cytoplasm. It carries out the reaction 5-[(5-phospho-1-deoxy-D-ribulos-1-ylimino)methylamino]-1-(5-phospho-beta-D-ribosyl)imidazole-4-carboxamide + L-glutamine = D-erythro-1-(imidazol-4-yl)glycerol 3-phosphate + 5-amino-1-(5-phospho-beta-D-ribosyl)imidazole-4-carboxamide + L-glutamate + H(+). It participates in amino-acid biosynthesis; L-histidine biosynthesis; L-histidine from 5-phospho-alpha-D-ribose 1-diphosphate: step 5/9. IGPS catalyzes the conversion of PRFAR and glutamine to IGP, AICAR and glutamate. The HisF subunit catalyzes the cyclization activity that produces IGP and AICAR from PRFAR using the ammonia provided by the HisH subunit. This chain is Imidazole glycerol phosphate synthase subunit HisF, found in Desulforapulum autotrophicum (strain ATCC 43914 / DSM 3382 / VKM B-1955 / HRM2) (Desulfobacterium autotrophicum).